Here is a 227-residue protein sequence, read N- to C-terminus: Enolase-phosphatase E1 (227 aa).

Mg(2+) contacts are provided by Asp11 and Glu13. Residues 118-119 (SS) and Lys161 contribute to the substrate site. Asp186 is a binding site for Mg(2+).

It belongs to the HAD-like hydrolase superfamily. MasA/MtnC family. In terms of assembly, monomer. Mg(2+) serves as cofactor.

Its subcellular location is the cytoplasm. The protein localises to the nucleus. The catalysed reaction is 5-methylsulfanyl-2,3-dioxopentyl phosphate + H2O = 1,2-dihydroxy-5-(methylsulfanyl)pent-1-en-3-one + phosphate. Its pathway is amino-acid biosynthesis; L-methionine biosynthesis via salvage pathway; L-methionine from S-methyl-5-thio-alpha-D-ribose 1-phosphate: step 3/6. It functions in the pathway amino-acid biosynthesis; L-methionine biosynthesis via salvage pathway; L-methionine from S-methyl-5-thio-alpha-D-ribose 1-phosphate: step 4/6. In terms of biological role, bifunctional enzyme that catalyzes the enolization of 2,3-diketo-5-methylthiopentyl-1-phosphate (DK-MTP-1-P) into the intermediate 2-hydroxy-3-keto-5-methylthiopentenyl-1-phosphate (HK-MTPenyl-1-P), which is then dephosphorylated to form the acireductone 1,2-dihydroxy-3-keto-5-methylthiopentene (DHK-MTPene). This is Enolase-phosphatase E1 from Saccharomyces cerevisiae (strain RM11-1a) (Baker's yeast).